Here is a 197-residue protein sequence, read N- to C-terminus: Probable nicotinate-nucleotide adenylyltransferase (197 aa).

The protein belongs to the NadD family.

It catalyses the reaction nicotinate beta-D-ribonucleotide + ATP + H(+) = deamido-NAD(+) + diphosphate. It functions in the pathway cofactor biosynthesis; NAD(+) biosynthesis; deamido-NAD(+) from nicotinate D-ribonucleotide: step 1/1. Catalyzes the reversible adenylation of nicotinate mononucleotide (NaMN) to nicotinic acid adenine dinucleotide (NaAD). The sequence is that of Probable nicotinate-nucleotide adenylyltransferase from Bordetella pertussis (strain Tohama I / ATCC BAA-589 / NCTC 13251).